The primary structure comprises 379 residues: Chaperone protein DnaJ (379 aa).

The region spanning Cys-7–Gly-72 is the J domain. The CR-type zinc finger occupies Gly-135–Glu-213. Zn(2+) contacts are provided by Cys-148, Cys-151, Cys-165, Cys-168, Cys-187, Cys-190, Cys-201, and Cys-204. CXXCXGXG motif repeat units follow at residues Cys-148–Gly-155, Cys-165–Gly-172, Cys-187–Gly-194, and Cys-201–Gly-208.

Belongs to the DnaJ family. In terms of assembly, homodimer. The cofactor is Zn(2+).

The protein localises to the cytoplasm. Participates actively in the response to hyperosmotic and heat shock by preventing the aggregation of stress-denatured proteins and by disaggregating proteins, also in an autonomous, DnaK-independent fashion. Unfolded proteins bind initially to DnaJ; upon interaction with the DnaJ-bound protein, DnaK hydrolyzes its bound ATP, resulting in the formation of a stable complex. GrpE releases ADP from DnaK; ATP binding to DnaK triggers the release of the substrate protein, thus completing the reaction cycle. Several rounds of ATP-dependent interactions between DnaJ, DnaK and GrpE are required for fully efficient folding. Also involved, together with DnaK and GrpE, in the DNA replication of plasmids through activation of initiation proteins. The polypeptide is Chaperone protein DnaJ (Rhodopseudomonas palustris (strain ATCC BAA-98 / CGA009)).